We begin with the raw amino-acid sequence, 350 residues long: Protein FAM118B (350 aa).

Alanine 2 carries the N-acetylalanine modification. Serine 9 is subject to Phosphoserine. A disordered region spans residues 330-350 (AREGQLNGSSAAHGEIRGCST).

It belongs to the FAM118 family.

The protein resides in the nucleus. It localises to the cajal body. Functionally, may play a role in Cajal bodies formation. The sequence is that of Protein FAM118B (Fam118b) from Rattus norvegicus (Rat).